We begin with the raw amino-acid sequence, 261 residues long: MNPEWGQAFVHVAVAGGLCAVAVFTGIFDSVSVQVGYEHYAEAPVAGLPAFLAMPFNSLVNMAYTLLGLSWLHRGGAMGLGPRYLKDVFAAMALLYGPVQWLRLWTQWRRAAVLDQWLTLPIFAWPVAWCLYLDRGWRPWLFLSLECVSLASYGLALLHPQGFEVALGAHVVAAVGQALRTHRHYGSTTSATYLALGVLSCLGFVVLKLCDHQLARWRLFQCLTGHFWSKVCDVLQFHFAFLFLTHFNTHPRFHPSGGKTR.

Transmembrane regions (helical) follow at residues 8-28, 43-63, 88-108, 113-133, 140-162, and 190-210; these read AFVH…TGIF, APVA…VNMA, VFAA…WTQW, VLDQ…CLYL, WLFL…HPQG, and SATY…LKLC.

As to expression, ubiquitous.

The protein resides in the membrane. The polypeptide is Transmembrane protein 187 (TMEM187) (Homo sapiens (Human)).